A 439-amino-acid chain; its full sequence is Trigger factor (439 aa).

The PPIase FKBP-type domain occupies 158-233 (GDVINIEYTI…IKEVLKRTLM (76 aa)). Positions 410-439 (KEISADEPVEEQKEEEEKEEAGSENSENKE) are disordered. A compositionally biased stretch (acidic residues) spans 414–428 (ADEPVEEQKEEEEKE).

It belongs to the FKBP-type PPIase family. Tig subfamily.

The protein localises to the cytoplasm. It catalyses the reaction [protein]-peptidylproline (omega=180) = [protein]-peptidylproline (omega=0). Its function is as follows. Involved in protein export. Acts as a chaperone by maintaining the newly synthesized protein in an open conformation. Functions as a peptidyl-prolyl cis-trans isomerase. The polypeptide is Trigger factor (Kosmotoga olearia (strain ATCC BAA-1733 / DSM 21960 / TBF 19.5.1)).